The chain runs to 272 residues: Rhamnulose-1-phosphate aldolase (272 aa).

Glu117 is a catalytic residue. 3 residues coordinate Zn(2+): His141, His143, and His212.

This sequence belongs to the aldolase class II family. RhaD subfamily. Zn(2+) serves as cofactor.

It localises to the cytoplasm. The enzyme catalyses L-rhamnulose 1-phosphate = (S)-lactaldehyde + dihydroxyacetone phosphate. Its pathway is carbohydrate degradation; L-rhamnose degradation; glycerone phosphate from L-rhamnose: step 3/3. In terms of biological role, catalyzes the reversible cleavage of L-rhamnulose-1-phosphate to dihydroxyacetone phosphate (DHAP) and L-lactaldehyde. The chain is Rhamnulose-1-phosphate aldolase from Mannheimia succiniciproducens (strain KCTC 0769BP / MBEL55E).